Consider the following 78-residue polypeptide: Mu-conotoxin BuIIIB (78 aa).

Residues 1–22 form the signal peptide; that stretch reads MMSKLGVLLTICLLLFPLFALP. Residues 23–51 constitute a propeptide that is removed on maturation; sequence QDGDQPADRPAERMQDDISSEQNPLLEKR. The disordered stretch occupies residues 26 to 46; the sequence is DQPADRPAERMQDDISSEQNP. Residues 28–38 show a composition bias toward basic and acidic residues; sequence PADRPAERMQD. 3 disulfides stabilise this stretch: Cys-56/Cys-68, Cys-57/Cys-74, and Cys-64/Cys-75. Cys-75 is subject to Cysteine amide.

This sequence belongs to the conotoxin M superfamily. In terms of tissue distribution, expressed by the venom duct.

It localises to the secreted. Its function is as follows. Mu-conotoxins block voltage-gated sodium channels (Nav). This synthetic toxin potently blocks rNav1.4/SCN4A (Kd=0.34-3.6 nM), rNav1.2/SCN2A (Kd=13 nM), rNav1.3/SCN3A (Kd=200 nM), rNav1.1/SCN1A (Kd=360 nM), mNav1.6/SCN8A (IC(50)=1.8 uM), rNav1.5/SCN5A (IC(50)=9 uM), rNav1.6/SCN8A (IC(50)&gt;30 uM). It is noteworthy that the toxin is 50-fold more potent on mouse Nav1.6 than on rat Nav1.6. The block of SCN4A is very slowly reversible. The polypeptide is Mu-conotoxin BuIIIB (Conus bullatus (Bubble cone)).